The following is a 396-amino-acid chain: Ribosomal RNA large subunit methyltransferase I (396 aa).

Residues 2–81 (SVRLVLAKGR…ESIDIAFFSR (80 aa)) enclose the PUA domain.

The protein belongs to the methyltransferase superfamily. RlmI family.

Its subcellular location is the cytoplasm. It catalyses the reaction cytidine(1962) in 23S rRNA + S-adenosyl-L-methionine = 5-methylcytidine(1962) in 23S rRNA + S-adenosyl-L-homocysteine + H(+). Specifically methylates the cytosine at position 1962 (m5C1962) of 23S rRNA. In Shigella boydii serotype 4 (strain Sb227), this protein is Ribosomal RNA large subunit methyltransferase I.